The following is a 2249-amino-acid chain: Endoribonuclease Dcr-1 (2249 aa).

Residues 1 to 371 form an essential for miRNA substrate recognition region; it reads MAFHWCDNNL…SPKVRRLLQT (371 aa). The important for interaction with loqs isoform PB (loqs-PB) stretch occupies residues 1-690; it reads MAFHWCDNNL…SKQPPTACDI (690 aa). The tract at residues 1-761 is helicase domain; the sequence is MAFHWCDNNL…AEIDTAHSLA (761 aa). The necessary for processing certain pre-miRNas, such as pre-let 7 and pre-bantam stretch occupies residues 1–1042; sequence MAFHWCDNNL…VSLELAKERV (1042 aa). 37-44 contacts ATP; it reads LGHRSSKE. A dispensable for activity and substrate recognition region spans residues 371 to 491; the sequence is TLRCFKPEEV…HHRDHNDGSD (121 aa). A disordered region spans residues 436–486; it reads TTEDRQTNRSAARVTPTPTPAHAKPKPSSGANTAQPRTRRRVYTRRHHRDH. Basic residues predominate over residues 472 to 484; it reads RTRRRVYTRRHHR. Residues 485–648 enclose the Helicase C-terminal domain; sequence DHNDGSDTLC…TGDTTEADSD (164 aa). An essential for miRNA substrate recognition region spans residues 496-606; that stretch reads LIYCNQNHTA…VQCKGRARAA (111 aa). The segment at 617-761 is dispensable for activity and substrate recognition; it reads SYKSPTVGSV…AEIDTAHSLA (145 aa). Disordered regions lie at residues 640–665 and 705–757; these read GDTT…PYTF and LDTS…IDTA. Positions 716–726 are enriched in low complexity; the sequence is SMSNTSPSESS. The region spanning 825–920 is the Dicer dsRNA-binding fold domain; the sequence is AIALVNKYCA…QPIGKEGFRA (96 aa). The tract at residues 924 to 957 is wing domain; sequence DWECFELEPEDEQIVQLSDEPRPGTTKRRQYYYK. The segment at 963-1108 is platform domain; the sequence is FCDCRPVAGA…WQFLELIQAN (146 aa). In terms of domain architecture, PAZ spans 1100–1246; that stretch reads QFLELIQANG…LVPELCTVHP (147 aa). An essential for production of mature miRNAs from pre-miRNAs. Also important for proper formation of the siRISC complex but is dispensable for biogenesis of siRNAs region spans residues 1147-2249; sequence QYFYVAEICP…KKQGLIAKKD (1103 aa). The segment at 1314-1351 is disordered; sequence ESKQKESLKDDTINGKDLADVEKKPTSEETQLDKDSKD. The residue at position 1423 (Ser1423) is a Phosphoserine. The segment at 1426-1477 is disordered; sequence FWDVSNGESGFKGPKSSQNKQGGKGKAKGPAKPTFNYYDSDNSLGSSYDDDD. Over residues 1437–1446 the composition is skewed to low complexity; that stretch reads KGPKSSQNKQ. The span at 1462–1471 shows a compositional bias: polar residues; it reads YYDSDNSLGS. RNase III domains lie at 1698 to 1919 and 1993 to 2150; these read ITSA…IECG and FEEF…LDSN. Mg(2+) is bound by residues Glu1745 and Asp1749. Phosphoserine occurs at positions 1877 and 1880. Residues Asp1905, Glu1908, Glu2032, Asp2136, and Glu2139 each coordinate Mg(2+). The DRBM domain occupies 2175-2241; the sequence is VPKSPIRELL…AKCALRQLKK (67 aa).

Belongs to the helicase family. Dicer subfamily. In terms of assembly, component of the miRNA-directed RISC loading complex (miRLC), composed of at least Dcr-1, AGO1 and loqs, which processes pre-miRNAs and loads the resulting miRNAs into the Argonaute 1 (AGO1)-containing RNA-induced silencing complex (miRISC). Interacts (via helicase domain) with dicing cofactor loqs isoform-PB (loqs-PB) (via DRBM 3 domain); this interaction enhances processing of pre-miRNAs by increasing substrate binding affinity of the dicer. Also able to interact with loqs isoforms PA and PC, however the relevance of such interactions are unclear in vivo. Different regions of the Dcr-1-loqs-PB heterodimer collaborate to recognize, bind and position the pre-miRNA for Dcr-1 mediated cleavage. In the absence of authentic miRNA substrates, the heterodimer favors a closed, catalytically incompetent, conformation, whereas binding of authentic pre-miRNA substrates stabilizes the relatively rare open, catalytically competent, conformation of the heterodimer. During substrate recognition, the Dcr-1 PAZ domain and pre-miRNA interact with the DRBM 1 domain of loqs-PB, which likely contributes to substrate recognition and stabilization. At the miRNA binding stage, the Dcr-1 DRBM domain and loqs-PB DRBM domains then bind the pre-miRNA in tandem to form a tight 'belt' around the pre-miRNA stem, the pre-miRNA loop is docked in the loop-binding region formed by DUF283, DRBM and part of the N terminus of Dcr-1, and the loqs-PB DRBM 1 and the wing domain of Dcr-1 act together to bind the 5' and 3' pre-miRNA termini within the PAZ and platform domains of Dcr-1. These interactions between the proteins and their pre-miRNA substrate stabilize a distorted form of the pre-miRNA and position the scissile phosphodiester bonds of the pre-miRNA at the RNase III catalytic cleavage sites of Dcr-1. Following Dcr-1 mediated cleavage, the miRNA duplex remains bound to loqs-PB DRBM 1, which dissociates from the Dcr-1 RNase III 1 domain but remains in contact with the PAZ and wing domains, suggesting that the heterodimer presents the mature miRNA to Ago2 for loading into the RNA-induced silencing complex (miRISC). Interacts with AGO2 and Fmr1 to form a RNA-induced silencing complex (siRISC), a ribonucleoprotein (RNP) complex involved in translation regulation; other components of the complex are RpL5, RpL11, AGO2 and Rm62. Interacts with piwi and vas; these interactions occur in the polar granules. Requires Mg(2+) as cofactor. It depends on Mn(2+) as a cofactor.

It is found in the cytoplasm. The protein resides in the cytosol. The catalysed reaction is Endonucleolytic cleavage to 5'-phosphomonoester.. Its activity is regulated as follows. Activity towards pre-miRNAs is not inhibited by inorganic phosphate. In terms of biological role, endoribonuclease which functions in microRNA- (miRNA) gene silencing and, independently of its ribonuclease III activity, also acts in the short interfering RNA- (siRNA) gene silencing pathway. Cleaves hairpin precursor miRNAs (pre-miRNA) to generate mature miRNAs (miRNAs) that are between twenty-one to twenty-four nucleotides in length and function in RNA silencing and post-transcriptional regulation of gene expression. Also functions in miRNA loading and assembly of the Argonaute 1 (AGO1)-containing RNA-induced silencing complex (miRISC), with the miRNAs serving as a guide to direct the miRISC to complementary RNAs to degrade them or prevent their translation. Independently of its catalytic activity, functions in the siRNA silencing pathway by promoting assembly of the siRNA-directed Argonaute 2 (AGO2)-containing RISC (siRISC). Required for the proper formation of a stable intermediate (R2) in siRISC assembly, which is formed from the R1 precursor complex (containing Dcr-2, R2D2 and the siRNA) and is used for assembly of the mature (R3) siRISC complex. It is not required for siRNA biogenesis. During embryogenesis, involved in germline fate determination. Post-transcriptionally regulates mei-P26 expression through the microRNA pathway, which in turn post-translationally regulates myc protein levels; involved in regulating cell and tissue growth. The sequence is that of Endoribonuclease Dcr-1 from Drosophila melanogaster (Fruit fly).